The sequence spans 285 residues: Polyamine aminopropyltransferase (285 aa).

Residues 5 to 241 (DNWYIEHFQP…GWWSVTMASK (237 aa)) form the PABS domain. Gln-35 contacts S-methyl-5'-thioadenosine. 2 residues coordinate spermidine: His-66 and Asp-90. S-methyl-5'-thioadenosine is bound by residues Asp-110 and 141 to 142 (DG). Asp-160 acts as the Proton acceptor in catalysis. 160–163 (DSTD) provides a ligand contact to spermidine. Pro-167 contributes to the S-methyl-5'-thioadenosine binding site.

The protein belongs to the spermidine/spermine synthase family. In terms of assembly, homodimer or homotetramer.

The protein localises to the cytoplasm. It catalyses the reaction S-adenosyl 3-(methylsulfanyl)propylamine + putrescine = S-methyl-5'-thioadenosine + spermidine + H(+). It participates in amine and polyamine biosynthesis; spermidine biosynthesis; spermidine from putrescine: step 1/1. In terms of biological role, catalyzes the irreversible transfer of a propylamine group from the amino donor S-adenosylmethioninamine (decarboxy-AdoMet) to putrescine (1,4-diaminobutane) to yield spermidine. This Xanthomonas campestris pv. campestris (strain 8004) protein is Polyamine aminopropyltransferase.